A 410-amino-acid chain; its full sequence is Argininosuccinate synthase (410 aa).

ATP-binding positions include 14–22 and alanine 41; that span reads AYSGGLDTS. L-citrulline-binding residues include tyrosine 92 and serine 97. Residue glycine 122 participates in ATP binding. L-aspartate-binding residues include threonine 124, asparagine 128, and aspartate 129. Asparagine 128 contributes to the L-citrulline binding site. Residues arginine 132, serine 183, serine 192, glutamate 268, and tyrosine 280 each coordinate L-citrulline.

Belongs to the argininosuccinate synthase family. Type 1 subfamily. Homotetramer.

The protein resides in the cytoplasm. The catalysed reaction is L-citrulline + L-aspartate + ATP = 2-(N(omega)-L-arginino)succinate + AMP + diphosphate + H(+). It participates in amino-acid biosynthesis; L-arginine biosynthesis; L-arginine from L-ornithine and carbamoyl phosphate: step 2/3. In Parvibaculum lavamentivorans (strain DS-1 / DSM 13023 / NCIMB 13966), this protein is Argininosuccinate synthase.